A 119-amino-acid chain; its full sequence is Ribonuclease P protein component (119 aa).

The protein belongs to the RnpA family. Consists of a catalytic RNA component (M1 or rnpB) and a protein subunit.

The catalysed reaction is Endonucleolytic cleavage of RNA, removing 5'-extranucleotides from tRNA precursor.. In terms of biological role, RNaseP catalyzes the removal of the 5'-leader sequence from pre-tRNA to produce the mature 5'-terminus. It can also cleave other RNA substrates such as 4.5S RNA. The protein component plays an auxiliary but essential role in vivo by binding to the 5'-leader sequence and broadening the substrate specificity of the ribozyme. This chain is Ribonuclease P protein component, found in Cronobacter sakazakii (strain ATCC BAA-894) (Enterobacter sakazakii).